Here is a 319-residue protein sequence, read N- to C-terminus: Pantothenate kinase (319 aa).

96–103 (GSVAVGKS) is an ATP binding site.

Belongs to the prokaryotic pantothenate kinase family.

It localises to the cytoplasm. The catalysed reaction is (R)-pantothenate + ATP = (R)-4'-phosphopantothenate + ADP + H(+). It functions in the pathway cofactor biosynthesis; coenzyme A biosynthesis; CoA from (R)-pantothenate: step 1/5. In Bacillus velezensis (strain DSM 23117 / BGSC 10A6 / LMG 26770 / FZB42) (Bacillus amyloliquefaciens subsp. plantarum), this protein is Pantothenate kinase.